The primary structure comprises 78 residues: Omega-conotoxin-like SO-4 (78 aa).

The N-terminal stretch at 1–22 is a signal peptide; the sequence is MKLTCMVIVAVLLLTACQLITA. The propeptide occupies 23-42; the sequence is DDSRGTQKHRSLRSTTKVSK. Cystine bridges form between Cys46–Cys62, Cys53–Cys65, and Cys61–Cys72.

The protein belongs to the conotoxin O1 superfamily. As to expression, expressed by the venom duct.

It is found in the secreted. Its function is as follows. Omega-conotoxins act at presynaptic membranes, they bind and block voltage-gated calcium channels (Cav). The chain is Omega-conotoxin-like SO-4 (SO4) from Conus striatus (Striated cone).